Here is a 467-residue protein sequence, read N- to C-terminus: Interleukin-6 receptor subunit alpha (467 aa).

The N-terminal stretch at 1-19 (MLAVGCALLTALLAAPGMA) is a signal peptide. Residues 20–112 (LAPRGCSKLE…AGSVRLLVDA (93 aa)) form the Ig-like C2-type domain. Residues 20-365 (LAPRGCSKLE…VQDSASVPLP (346 aa)) are Extracellular-facing. 4 disulfide bridges follow: cysteine 25-cysteine 193, cysteine 47-cysteine 96, cysteine 121-cysteine 132, and cysteine 165-cysteine 176. 2 N-linked (GlcNAc...) asparagine glycosylation sites follow: asparagine 55 and asparagine 93. Fibronectin type-III domains follow at residues 113–217 (PPEE…LQPD) and 218–316 (PPVN…IPWT). 2 N-linked (GlcNAc...) asparagine glycosylation sites follow: asparagine 221 and asparagine 245. The WSXWS motif motif lies at 303 to 307 (WSEWS). A disordered region spans residues 315-357 (WTESRSSPAETELPLSTQAPTTNEDDEDISSKESANATSLPVQ). 2 stretches are compositionally biased toward polar residues: residues 317–336 (ESRSSPAETELPLSTQAPTT) and 346–357 (KESANATSLPVQ). Residue asparagine 350 is glycosylated (N-linked (GlcNAc...) asparagine). Residue threonine 352 is glycosylated (O-linked (GlcNAc) threonine). A helical membrane pass occupies residues 366–386 (TFLVAGGSLAFGTLLCIGIIL). Residues 387 to 467 (RFKKTGQLQA…VSNRDYFFPR (81 aa)) lie on the Cytoplasmic side of the membrane. Residues 428 to 467 (ISPPVSPNSLGDNTSRNSRPEARGPQSPYDVSNRDYFFPR) are disordered.

Belongs to the type I cytokine receptor family. Type 3 subfamily. Component of a hexamer of two molecules each of IL6, IL6R and IL6ST; first binds to IL6 to associate with the signaling subunit IL6ST. Interacts (via N-terminal ectodomain) with SORL1; this interaction may affect IL6-binding to IL6R, hence decrease IL6 'classic-signaling'. As to quaternary structure, also interacts with SORL1; this interaction leads to soluble IL6R internalization. May form a trimeric complex with the soluble SORL1 ectodomain and circulating IL6 receptor; this interaction might stabilize circulating IL6, hence promote IL6 'trans-signaling'. Post-translationally, a short soluble form is also released from the membrane by proteolysis. The sIL6R is formed by limited proteolysis of membrane-bound receptors, a process referred to as ectodomain shedding. mIL6R is cleaved by the proteases ADAM10 and ADAM17. Glycosylated. Glycosylation is dispensable for transport, signaling, and cell-surface turnover. Glycosylation at Asn-55 is a protease-regulatory exosite. Glycosylation is required for ADAM17-mediated proteolysis. Expressed in liver.

It localises to the cell membrane. The protein localises to the secreted. Classic and trans-signaling are both inhibited by tocilizumab, a humanized monoclonal antibody that blocks interleukin IL6R signaling. Its function is as follows. Part of the receptor for interleukin 6. Binds to IL6 with low affinity, but does not transduce a signal. Signal activation necessitate an association with IL6ST. Activation leads to the regulation of the immune response, acute-phase reactions and hematopoiesis. The interaction with membrane-bound IL6R and IL6ST stimulates 'classic signaling', the restricted expression of the IL6R limits classic IL6 signaling to only a few tissues such as the liver and some cells of the immune system. Whereas the binding of IL6 and soluble IL6R to IL6ST stimulates 'trans-signaling'. Alternatively, 'cluster signaling' occurs when membrane-bound IL6:IL6R complexes on transmitter cells activate IL6ST receptors on neighboring receiver cells. Signaling via the membrane-bound IL6R is mostly regenerative and anti-inflammatory. Drives naive CD4(+) T cells to the Th17 lineage, through 'cluster signaling' by dendritic cells. In terms of biological role, soluble form of IL6 receptor (sIL6R) that acts as an agonist of IL6 activity. The IL6:sIL6R complex (hyper-IL6) binds to IL6ST/gp130 on cell surfaces and induces signaling also on cells that do not express membrane-bound IL6R in a process called IL6 'trans-signaling'. sIL6R is causative for the pro-inflammatory properties of IL6 and an important player in the development of chronic inflammatory diseases. In complex with IL6, is required for induction of VEGF production. Plays a protective role during liver injury, being required for maintenance of tissue regeneration. 'Trans-signaling' in central nervous system regulates energy and glucose homeostasis. This chain is Interleukin-6 receptor subunit alpha (IL6R), found in Sus scrofa (Pig).